Reading from the N-terminus, the 290-residue chain is Fructose-1,6-bisphosphatase class 1 (290 aa).

Mg(2+)-binding residues include glutamate 78, aspartate 96, leucine 98, and aspartate 99. Substrate contacts are provided by residues 99–102, tyrosine 201, and lysine 226; that span reads DGSS. Residue glutamate 232 coordinates Mg(2+).

This sequence belongs to the FBPase class 1 family. In terms of assembly, homotetramer. The cofactor is Mg(2+).

Its subcellular location is the cytoplasm. It catalyses the reaction beta-D-fructose 1,6-bisphosphate + H2O = beta-D-fructose 6-phosphate + phosphate. It participates in carbohydrate biosynthesis; gluconeogenesis. The protein is Fructose-1,6-bisphosphatase class 1 of Helicobacter pylori (strain HPAG1).